The sequence spans 454 residues: tRNA modification GTPase MnmE (454 aa).

Positions 23, 80, and 120 each coordinate (6S)-5-formyl-5,6,7,8-tetrahydrofolate. Residues 216–377 (TIKIVIAGPP…LKNKILEITT (162 aa)) enclose the TrmE-type G domain. N226 provides a ligand contact to K(+). Residues 226–231 (NVGKSS), 245–251 (TNIPGTT), and 270–273 (DTAG) each bind GTP. Residue S230 participates in Mg(2+) binding. Residues T245, I247, and T250 each coordinate K(+). T251 contacts Mg(2+). Position 454 (K454) interacts with (6S)-5-formyl-5,6,7,8-tetrahydrofolate.

The protein belongs to the TRAFAC class TrmE-Era-EngA-EngB-Septin-like GTPase superfamily. TrmE GTPase family. In terms of assembly, homodimer. Heterotetramer of two MnmE and two MnmG subunits. The cofactor is K(+).

The protein resides in the cytoplasm. In terms of biological role, exhibits a very high intrinsic GTPase hydrolysis rate. Involved in the addition of a carboxymethylaminomethyl (cmnm) group at the wobble position (U34) of certain tRNAs, forming tRNA-cmnm(5)s(2)U34. This chain is tRNA modification GTPase MnmE, found in Buchnera aphidicola subsp. Cinara cedri (strain Cc).